The chain runs to 1749 residues: Transposon Ty1-NL2 Gag-Pol polyprotein (1749 aa).

4 stretches are compositionally biased toward polar residues: residues 1-23, 48-60, 71-97, and 129-152; these read MESQ…SVTS, TKAN…TPAS, SPQT…NQAN, and QFPQ…GNTF. Disordered regions lie at residues 1–97, 129–171, and 352–421; these read MESQ…NQAN, QFPQ…YVRP, and GSRN…SKST. The span at 153-165 shows a compositional bias: low complexity; the sequence is TDSSSADSDMTST. The segment at 299-401 is RNA-binding; it reads NNGIHINNKV…NSKSKTARAH (103 aa). Positions 402 to 418 are enriched in low complexity; the sequence is NVSTSNNSPSTDNDSIS. Catalysis depends on aspartate 461, which acts as the For protease activity; shared with dimeric partner. Residues 583–640 are integrase-type zinc finger-like; sequence NVHTSESTRKYPYPFIHRMLAHANAQTIRYSLKNNTITYFNESDVDWSSAIDYQCPDC. The Integrase catalytic domain occupies 660–835; it reads NSYEPFQYLH…AGLDISTLLP (176 aa). Mg(2+)-binding residues include aspartate 671 and aspartate 736. The interval 945 to 1166 is disordered; sequence PRNVLSKAVS…LGGIGDSNAY (222 aa). The span at 954-963 shows a compositional bias: low complexity; the sequence is SPTDSTPPST. A compositionally biased stretch (polar residues) spans 999–1009; the sequence is STPQISDIEST. Basic and acidic residues predominate over residues 1032–1047; it reads ESSHTSKSKDFRHSDS. Polar residues-rich tracts occupy residues 1048–1076 and 1089–1100; these read YSDN…QTSE and SIDTSSSESNSL. Residues 1172–1206 carry the Bipartite nuclear localization signal motif; it reads KKRSLEDNETEIKVSRDTWNTKNMRSLEPPRSKKR. A Reverse transcriptase Ty1/copia-type domain is found at 1332-1470; sequence NNYYITQLDI…DILGLEIKYQ (139 aa). Positions 1340, 1421, 1422, 1604, 1646, and 1679 each coordinate Mg(2+). Positions 1604–1746 constitute an RNase H Ty1/copia-type domain; sequence DASYGNQPYY…IKTFKLLTNK (143 aa).

In terms of assembly, the capsid protein forms a homotrimer, from which the VLPs are assembled. The protease is a homodimer, whose active site consists of two apposed aspartic acid residues. Post-translationally, initially, virus-like particles (VLPs) are composed of the structural unprocessed proteins Gag and Gag-Pol, and also contain the host initiator methionine tRNA (tRNA(i)-Met) which serves as a primer for minus-strand DNA synthesis, and a dimer of genomic Ty RNA. Processing of the polyproteins occurs within the particle and proceeds by an ordered pathway, called maturation. First, the protease (PR) is released by autocatalytic cleavage of the Gag-Pol polyprotein yielding capsid protein p45 and a Pol-p154 precursor protein. This cleavage is a prerequisite for subsequent processing of Pol-p154 at the remaining sites to release the mature structural and catalytic proteins. Maturation takes place prior to the RT reaction and is required to produce transposition-competent VLPs.

Its subcellular location is the cytoplasm. It localises to the nucleus. It catalyses the reaction DNA(n) + a 2'-deoxyribonucleoside 5'-triphosphate = DNA(n+1) + diphosphate. The catalysed reaction is Endonucleolytic cleavage to 5'-phosphomonoester.. In terms of biological role, capsid protein (CA) is the structural component of the virus-like particle (VLP), forming the shell that encapsulates the retrotransposons dimeric RNA genome. The particles are assembled from trimer-clustered units and there are holes in the capsid shells that allow for the diffusion of macromolecules. CA also has nucleocapsid-like chaperone activity, promoting primer tRNA(i)-Met annealing to the multipartite primer-binding site (PBS), dimerization of Ty1 RNA and initiation of reverse transcription. Functionally, the aspartyl protease (PR) mediates the proteolytic cleavages of the Gag and Gag-Pol polyproteins after assembly of the VLP. Its function is as follows. Reverse transcriptase/ribonuclease H (RT) is a multifunctional enzyme that catalyzes the conversion of the retro-elements RNA genome into dsDNA within the VLP. The enzyme displays a DNA polymerase activity that can copy either DNA or RNA templates, and a ribonuclease H (RNase H) activity that cleaves the RNA strand of RNA-DNA heteroduplexes during plus-strand synthesis and hydrolyzes RNA primers. The conversion leads to a linear dsDNA copy of the retrotransposon that includes long terminal repeats (LTRs) at both ends. Integrase (IN) targets the VLP to the nucleus, where a subparticle preintegration complex (PIC) containing at least integrase and the newly synthesized dsDNA copy of the retrotransposon must transit the nuclear membrane. Once in the nucleus, integrase performs the integration of the dsDNA into the host genome. The chain is Transposon Ty1-NL2 Gag-Pol polyprotein (TY1B-NL2) from Saccharomyces cerevisiae (strain ATCC 204508 / S288c) (Baker's yeast).